A 333-amino-acid chain; its full sequence is Phosphoribosylformylglycinamidine cyclo-ligase (333 aa).

It belongs to the AIR synthase family.

It localises to the cytoplasm. It catalyses the reaction 2-formamido-N(1)-(5-O-phospho-beta-D-ribosyl)acetamidine + ATP = 5-amino-1-(5-phospho-beta-D-ribosyl)imidazole + ADP + phosphate + H(+). Its pathway is purine metabolism; IMP biosynthesis via de novo pathway; 5-amino-1-(5-phospho-D-ribosyl)imidazole from N(2)-formyl-N(1)-(5-phospho-D-ribosyl)glycinamide: step 2/2. This chain is Phosphoribosylformylglycinamidine cyclo-ligase, found in Methanosarcina acetivorans (strain ATCC 35395 / DSM 2834 / JCM 12185 / C2A).